The sequence spans 363 residues: Cellular tumor antigen p53 (363 aa).

The interval 1–29 (MEPSSETGMDPPLSQETFEDLWSLLPDPL) is transcription activation (acidic). The DNA-binding element occupies 76 to 267 (DYAGKYGLQL…RTEEDNYTKK (192 aa)). Zn(2+)-binding residues include cysteine 150, histidine 153, cysteine 213, and cysteine 217. An interaction with DNA region spans residues 248–255 (RVCACPGR). The interval 257 to 290 (RRTEEDNYTKKRGLKPSGKRELAHPPSSEPPLPK) is disordered. The Bipartite nuclear localization signal signature appears at 275–292 (KRELAHPPSSEPPLPKKR). The segment at 300 to 331 (EEIFTLRIKGRSRYEMIKKLNDALELQESLDQ) is oligomerization. A Nuclear export signal motif is present at residues 314–325 (EMIKKLNDALEL). Residues 344–356 (EIKPKKGKKLLVK) are basic (repression of DNA-binding).

It belongs to the p53 family. As to quaternary structure, binds DNA as a homotetramer. The cofactor is Zn(2+). As to expression, ubiquitous.

It is found in the cytoplasm. The protein resides in the nucleus. In terms of biological role, multifunctional transcription factor that induces cell cycle arrest, DNA repair or apoptosis upon binding to its target DNA sequence. Acts as a tumor suppressor in many tumor types; induces growth arrest or apoptosis depending on the physiological circumstances and cell type. Negatively regulates cell division by controlling expression of a set of genes required for this process. One of the activated genes is an inhibitor of cyclin-dependent kinases. Apoptosis induction seems to be mediated either by stimulation of BAX and FAS antigen expression, or by repression of Bcl-2 expression. The sequence is that of Cellular tumor antigen p53 (tp53) from Xenopus laevis (African clawed frog).